The following is a 194-amino-acid chain: Orotate phosphoribosyltransferase (194 aa).

5-phospho-alpha-D-ribose 1-diphosphate is bound by residues Arg-102, Lys-103, Lys-106, His-108, and 129–137; that span reads EDVVTTGGS. Orotate-binding residues include Thr-133 and Arg-161.

This sequence belongs to the purine/pyrimidine phosphoribosyltransferase family. PyrE subfamily. In terms of assembly, homodimer. Requires Mg(2+) as cofactor.

The catalysed reaction is orotidine 5'-phosphate + diphosphate = orotate + 5-phospho-alpha-D-ribose 1-diphosphate. The protein operates within pyrimidine metabolism; UMP biosynthesis via de novo pathway; UMP from orotate: step 1/2. Its function is as follows. Catalyzes the transfer of a ribosyl phosphate group from 5-phosphoribose 1-diphosphate to orotate, leading to the formation of orotidine monophosphate (OMP). This is Orotate phosphoribosyltransferase from Synechococcus sp. (strain CC9902).